Reading from the N-terminus, the 305-residue chain is Methionyl-tRNA formyltransferase (305 aa).

111–114 (SLLP) is a (6S)-5,6,7,8-tetrahydrofolate binding site.

Belongs to the Fmt family.

The catalysed reaction is L-methionyl-tRNA(fMet) + (6R)-10-formyltetrahydrofolate = N-formyl-L-methionyl-tRNA(fMet) + (6S)-5,6,7,8-tetrahydrofolate + H(+). Attaches a formyl group to the free amino group of methionyl-tRNA(fMet). The formyl group appears to play a dual role in the initiator identity of N-formylmethionyl-tRNA by promoting its recognition by IF2 and preventing the misappropriation of this tRNA by the elongation apparatus. The protein is Methionyl-tRNA formyltransferase of Campylobacter jejuni subsp. doylei (strain ATCC BAA-1458 / RM4099 / 269.97).